We begin with the raw amino-acid sequence, 333 residues long: Glyceraldehyde-3-phosphate dehydrogenase (333 aa).

Residues 11–12, Asp-32, and Arg-77 contribute to the NAD(+) site; that span reads RI. D-glyceraldehyde 3-phosphate contacts are provided by residues 148–150, Thr-179, 208–209, and Arg-231; these read SCT and TG. Cys-149 serves as the catalytic Nucleophile. Asn-313 lines the NAD(+) pocket.

The protein belongs to the glyceraldehyde-3-phosphate dehydrogenase family. As to quaternary structure, homotetramer.

It is found in the cytoplasm. The enzyme catalyses D-glyceraldehyde 3-phosphate + phosphate + NAD(+) = (2R)-3-phospho-glyceroyl phosphate + NADH + H(+). It functions in the pathway carbohydrate degradation; glycolysis; pyruvate from D-glyceraldehyde 3-phosphate: step 1/5. The chain is Glyceraldehyde-3-phosphate dehydrogenase (Gapdh) from Glossina morsitans morsitans (Savannah tsetse fly).